A 215-amino-acid chain; its full sequence is UPF0502 protein Shal_1801 (215 aa).

It belongs to the UPF0502 family.

The chain is UPF0502 protein Shal_1801 from Shewanella halifaxensis (strain HAW-EB4).